Reading from the N-terminus, the 331-residue chain is 6-phosphogluconolactonase (331 aa).

Lys-287 is modified (N6-acetyllysine).

It belongs to the cycloisomerase 2 family.

It catalyses the reaction 6-phospho-D-glucono-1,5-lactone + H2O = 6-phospho-D-gluconate + H(+). Its pathway is carbohydrate degradation; pentose phosphate pathway; D-ribulose 5-phosphate from D-glucose 6-phosphate (oxidative stage): step 2/3. Functionally, catalyzes the hydrolysis of 6-phosphogluconolactone to 6-phosphogluconate. This chain is 6-phosphogluconolactonase, found in Shigella flexneri.